Here is a 152-residue protein sequence, read N- to C-terminus: Ribonuclease H (152 aa).

Residues 6–147 enclose the RNase H type-1 domain; it reads KKNNVIAYTD…ADELANKAIA (142 aa). Positions 15, 53, 75, and 139 each coordinate Mg(2+).

The protein belongs to the RNase H family. In terms of assembly, monomer. Mg(2+) is required as a cofactor.

Its subcellular location is the cytoplasm. The catalysed reaction is Endonucleolytic cleavage to 5'-phosphomonoester.. Functionally, endonuclease that specifically degrades the RNA of RNA-DNA hybrids. The protein is Ribonuclease H of Francisella philomiragia subsp. philomiragia (strain ATCC 25017 / CCUG 19701 / FSC 153 / O#319-036).